Reading from the N-terminus, the 262-residue chain is Acyl-[acyl-carrier-protein]--UDP-N-acetylglucosamine O-acyltransferase (262 aa).

The protein belongs to the transferase hexapeptide repeat family. LpxA subfamily. Homotrimer.

It is found in the cytoplasm. It carries out the reaction a (3R)-hydroxyacyl-[ACP] + UDP-N-acetyl-alpha-D-glucosamine = a UDP-3-O-[(3R)-3-hydroxyacyl]-N-acetyl-alpha-D-glucosamine + holo-[ACP]. It functions in the pathway glycolipid biosynthesis; lipid IV(A) biosynthesis; lipid IV(A) from (3R)-3-hydroxytetradecanoyl-[acyl-carrier-protein] and UDP-N-acetyl-alpha-D-glucosamine: step 1/6. Its function is as follows. Involved in the biosynthesis of lipid A, a phosphorylated glycolipid that anchors the lipopolysaccharide to the outer membrane of the cell. This chain is Acyl-[acyl-carrier-protein]--UDP-N-acetylglucosamine O-acyltransferase, found in Mannheimia succiniciproducens (strain KCTC 0769BP / MBEL55E).